A 356-amino-acid polypeptide reads, in one-letter code: Holliday junction branch migration complex subunit RuvB (356 aa).

Residues 1–14 are compositionally biased toward polar residues; that stretch reads MAIVSSITNHSSLP. A disordered region spans residues 1-20; the sequence is MAIVSSITNHSSLPNDKGEE. The segment at 13 to 201 is large ATPase domain (RuvB-L); sequence LPNDKGEERL…FGITQRLDFY (189 aa). ATP contacts are provided by Leu-40, Arg-41, Gly-82, Lys-85, Thr-86, Thr-87, Arg-191, Tyr-201, and Arg-238. Residue Thr-86 participates in Mg(2+) binding. The tract at residues 202–273 is small ATPAse domain (RuvB-S); it reads NYLDLENIIK…VVNDALDLHR (72 aa). Residues 276-356 are head domain (RuvB-H); the sequence is QRGLDATDRS…LLTSPNNIDK (81 aa). DNA-binding residues include Arg-331 and Arg-336.

The protein belongs to the RuvB family. Homohexamer. Forms an RuvA(8)-RuvB(12)-Holliday junction (HJ) complex. HJ DNA is sandwiched between 2 RuvA tetramers; dsDNA enters through RuvA and exits via RuvB. An RuvB hexamer assembles on each DNA strand where it exits the tetramer. Each RuvB hexamer is contacted by two RuvA subunits (via domain III) on 2 adjacent RuvB subunits; this complex drives branch migration. In the full resolvosome a probable DNA-RuvA(4)-RuvB(12)-RuvC(2) complex forms which resolves the HJ.

It is found in the cytoplasm. It carries out the reaction ATP + H2O = ADP + phosphate + H(+). In terms of biological role, the RuvA-RuvB-RuvC complex processes Holliday junction (HJ) DNA during genetic recombination and DNA repair, while the RuvA-RuvB complex plays an important role in the rescue of blocked DNA replication forks via replication fork reversal (RFR). RuvA specifically binds to HJ cruciform DNA, conferring on it an open structure. The RuvB hexamer acts as an ATP-dependent pump, pulling dsDNA into and through the RuvAB complex. RuvB forms 2 homohexamers on either side of HJ DNA bound by 1 or 2 RuvA tetramers; 4 subunits per hexamer contact DNA at a time. Coordinated motions by a converter formed by DNA-disengaged RuvB subunits stimulates ATP hydrolysis and nucleotide exchange. Immobilization of the converter enables RuvB to convert the ATP-contained energy into a lever motion, pulling 2 nucleotides of DNA out of the RuvA tetramer per ATP hydrolyzed, thus driving DNA branch migration. The RuvB motors rotate together with the DNA substrate, which together with the progressing nucleotide cycle form the mechanistic basis for DNA recombination by continuous HJ branch migration. Branch migration allows RuvC to scan DNA until it finds its consensus sequence, where it cleaves and resolves cruciform DNA. The sequence is that of Holliday junction branch migration complex subunit RuvB from Prochlorococcus marinus (strain NATL2A).